The primary structure comprises 902 residues: Probable leucine--tRNA ligase, mitochondrial (902 aa).

K67 carries the post-translational modification N6-acetyllysine. The 'HIGH' region motif lies at 91–101; sequence YPSGKLHMGHV. N6-acetyllysine is present on K235. Positions 638–642 match the 'KMSKS' region motif; the sequence is KMSKS. K641 is an ATP binding site.

This sequence belongs to the class-I aminoacyl-tRNA synthetase family.

Its subcellular location is the mitochondrion matrix. It carries out the reaction tRNA(Leu) + L-leucine + ATP = L-leucyl-tRNA(Leu) + AMP + diphosphate. In Mus musculus (Mouse), this protein is Probable leucine--tRNA ligase, mitochondrial (Lars2).